The following is a 136-amino-acid chain: Putative pre-16S rRNA nuclease (136 aa).

It belongs to the YqgF nuclease family.

The protein localises to the cytoplasm. Its function is as follows. Could be a nuclease involved in processing of the 5'-end of pre-16S rRNA. The chain is Putative pre-16S rRNA nuclease from Francisella tularensis subsp. novicida (strain U112).